The sequence spans 312 residues: Photosystem I assembly protein Ycf4 (312 aa).

The next 3 helical transmembrane spans lie at 42-62, 91-111, and 113-133; these read WAFI…SSYF, IILF…GLFL, and FYLW…IYIY.

Belongs to the Ycf4 family.

It is found in the plastid. It localises to the chloroplast thylakoid membrane. Seems to be required for the assembly of the photosystem I complex. In Pleurastrum terricola (Filamentous green alga), this protein is Photosystem I assembly protein Ycf4.